A 234-amino-acid chain; its full sequence is 7-cyano-7-deazaguanine synthase (234 aa).

Residue 15-25 (LSGGLDSSTCL) participates in ATP binding. Zn(2+) contacts are provided by C199, C208, C211, and C214.

The protein belongs to the QueC family. Requires Zn(2+) as cofactor.

It catalyses the reaction 7-carboxy-7-deazaguanine + NH4(+) + ATP = 7-cyano-7-deazaguanine + ADP + phosphate + H2O + H(+). It participates in purine metabolism; 7-cyano-7-deazaguanine biosynthesis. Catalyzes the ATP-dependent conversion of 7-carboxy-7-deazaguanine (CDG) to 7-cyano-7-deazaguanine (preQ(0)). In Anaeromyxobacter dehalogenans (strain 2CP-C), this protein is 7-cyano-7-deazaguanine synthase.